Reading from the N-terminus, the 646-residue chain is uncharacterized protein (646 aa).

10 helical membrane passes run 20-40 (AYFLSCVFAVSVFFVFTSFIF), 54-74 (LVKTCLSAALVVIIVFCIFFI), 115-135 (LAAIAAGIGAGLLFSKLFFMI), 154-174 (AFVMTIAGFLILFQTLLILSL), 203-223 (TVLSLLCLGSGYYLSATANAI), 232-252 (ILILVLIGTYFFFTQSSVAFF), 285-305 (LFLTSVITAVILTATGVIYMF), 523-543 (GVALMLFIGLFVSVLFFIVQG), 582-602 (IGFLFFIPFIAGTIHAGFAYA), and 613-633 (FLEAVIVIFIYFVFQALYYIV).

It belongs to the ABC-4 integral membrane protein family.

The protein resides in the cell membrane. This is an uncharacterized protein from Bacillus subtilis (strain 168).